Here is a 525-residue protein sequence, read N- to C-terminus: GMP synthase [glutamine-hydrolyzing] (525 aa).

One can recognise a Glutamine amidotransferase type-1 domain in the interval 9–207 (RILILDFGSQ…VLDICGCEAL (199 aa)). Cys-86 serves as the catalytic Nucleophile. Residues His-181 and Glu-183 contribute to the active site. The GMPS ATP-PPase domain maps to 208-400 (WTPSKIAEDA…LGLPYDMVYR (193 aa)). An ATP-binding site is contributed by 235 to 241 (SGGVDSS).

Homodimer.

The catalysed reaction is XMP + L-glutamine + ATP + H2O = GMP + L-glutamate + AMP + diphosphate + 2 H(+). It functions in the pathway purine metabolism; GMP biosynthesis; GMP from XMP (L-Gln route): step 1/1. Its function is as follows. Catalyzes the synthesis of GMP from XMP. This chain is GMP synthase [glutamine-hydrolyzing], found in Pseudomonas fluorescens (strain Pf0-1).